Consider the following 235-residue polypeptide: Small ribosomal subunit protein uS3 (235 aa).

The KH type-2 domain maps to 39 to 107 (VRKFLNKELA…PAQINIAEVK (69 aa)). The segment at 215-235 (AQSEQQPADKPKKAPRGKGRK) is disordered.

This sequence belongs to the universal ribosomal protein uS3 family. Part of the 30S ribosomal subunit. Forms a tight complex with proteins S10 and S14.

In terms of biological role, binds the lower part of the 30S subunit head. Binds mRNA in the 70S ribosome, positioning it for translation. The chain is Small ribosomal subunit protein uS3 from Haemophilus influenzae (strain PittEE).